A 200-amino-acid polypeptide reads, in one-letter code: Protein GrpE (200 aa).

Residues 1–25 (MMSKQNKKDWKKFKDEHKEEHKVEN) show a composition bias toward basic and acidic residues. The disordered stretch occupies residues 1-52 (MMSKQNKKDWKKFKDEHKEEHKVENEILEEETDEESQHQEPALGHPSYTALE).

Belongs to the GrpE family. As to quaternary structure, homodimer.

It localises to the cytoplasm. Its function is as follows. Participates actively in the response to hyperosmotic and heat shock by preventing the aggregation of stress-denatured proteins, in association with DnaK and GrpE. It is the nucleotide exchange factor for DnaK and may function as a thermosensor. Unfolded proteins bind initially to DnaJ; upon interaction with the DnaJ-bound protein, DnaK hydrolyzes its bound ATP, resulting in the formation of a stable complex. GrpE releases ADP from DnaK; ATP binding to DnaK triggers the release of the substrate protein, thus completing the reaction cycle. Several rounds of ATP-dependent interactions between DnaJ, DnaK and GrpE are required for fully efficient folding. This Legionella pneumophila subsp. pneumophila (strain Philadelphia 1 / ATCC 33152 / DSM 7513) protein is Protein GrpE.